The chain runs to 438 residues: tRNA(Ile)-lysidine synthase (438 aa).

26-31 (SGGADS) contacts ATP.

This sequence belongs to the tRNA(Ile)-lysidine synthase family.

It is found in the cytoplasm. The enzyme catalyses cytidine(34) in tRNA(Ile2) + L-lysine + ATP = lysidine(34) in tRNA(Ile2) + AMP + diphosphate + H(+). Functionally, ligates lysine onto the cytidine present at position 34 of the AUA codon-specific tRNA(Ile) that contains the anticodon CAU, in an ATP-dependent manner. Cytidine is converted to lysidine, thus changing the amino acid specificity of the tRNA from methionine to isoleucine. The protein is tRNA(Ile)-lysidine synthase of Parabacteroides distasonis (strain ATCC 8503 / DSM 20701 / CIP 104284 / JCM 5825 / NCTC 11152).